A 240-amino-acid polypeptide reads, in one-letter code: Pro-opiomelanocortin B (240 aa).

A signal peptide spans 1–36; that stretch reads MFGTFLQNQSVRLNMVCAPWLLAVVVVCVCNPGVEG. Glutamine 37 carries the post-translational modification Pyrrolidone carboxylic acid. Residue histidine 111 is a propeptide. Residue serine 112 is modified to N-acetylserine; in Corticotropin. Isoleucine 124 carries the isoleucine amide modification.

It belongs to the POMC family. In terms of processing, specific enzymatic cleavages at paired basic residues yield the different active peptides. Post-translationally, acetylation of beta-endorphin occurs in a tissue-specific manner. As to expression, pituitary and hypothalamus of adult diploid animals.

The protein localises to the secreted. Functionally, stimulates the adrenal glands to release cortisol. Melanocyte-stimulating hormone alpha: Anorexigenic peptide. Increases the pigmentation of skin by increasing melanin production in melanocytes. In terms of biological role, melanocyte-stimulating hormone beta: Increases the pigmentation of skin by increasing melanin production in melanocytes. Its function is as follows. Beta-endorphin: Endogenous orexigenic opiate. Functionally, endogenous opiate. This is Pro-opiomelanocortin B (pomcb) from Oncorhynchus mykiss (Rainbow trout).